A 376-amino-acid polypeptide reads, in one-letter code: Lipid-A-disaccharide synthase (376 aa).

It belongs to the LpxB family.

It carries out the reaction a lipid X + a UDP-2-N,3-O-bis[(3R)-3-hydroxyacyl]-alpha-D-glucosamine = a lipid A disaccharide + UDP + H(+). Its pathway is bacterial outer membrane biogenesis; LPS lipid A biosynthesis. In terms of biological role, condensation of UDP-2,3-diacylglucosamine and 2,3-diacylglucosamine-1-phosphate to form lipid A disaccharide, a precursor of lipid A, a phosphorylated glycolipid that anchors the lipopolysaccharide to the outer membrane of the cell. The chain is Lipid-A-disaccharide synthase from Coxiella burnetii (strain RSA 331 / Henzerling II).